We begin with the raw amino-acid sequence, 67 residues long: Conotoxin TsMMSK-B021 (67 aa).

An N-terminal signal peptide occupies residues 1-20 (MMSKLGVLLTICLLLFPLTA). The propeptide occupies 21–50 (VQLDGDQPADLPELRAQDFAPERSPWFDPV). 3 disulfides stabilise this stretch: cysteine 53/cysteine 65, cysteine 54/cysteine 61, and cysteine 58/cysteine 64. At proline 63 the chain carries 4-hydroxyproline.

Belongs to the conotoxin M superfamily. In terms of tissue distribution, expressed by the venom duct.

It is found in the secreted. This is Conotoxin TsMMSK-B021 from Conus tessulatus (Tessellate cone).